Consider the following 529-residue polypeptide: Listeriolysin O (529 aa).

An N-terminal signal peptide occupies residues 1–24 (MKKIMLVFITLILVSLPIAQQTEA). Positions 35 to 54 (SISSMAPPASPPASPKTPIE) are disordered. A run of 4 beta stranded transmembrane segments spans residues 214–227 (ESQLIAKFGTAFKA), 234–243 (VNFGAISEGK), 312–321 (STKVKAAFDA), and 329–341 (SGDVELTNIIKNS). The Conserved undecapeptide motif lies at 483–493 (ECTGLAWEWWR). The short motif at 515–516 (TL) is the Cholesterol binding element.

Belongs to the cholesterol-dependent cytolysin family. As to quaternary structure, homooligomeric pore complex of 35 to 50 subunits; when inserted in the host membrane.

It is found in the secreted. The protein resides in the host membrane. Its subcellular location is the host cell membrane. Its activity is regulated as follows. Activity of listeriolysin O is regulated on multiple levels. It should be high in the phagosome, thereby allowing escape of the bacteria from the phagosomal compartment. Then, once inside the host cytosol, the activity must be controlled to prevent lysis of the host plasma membrane and loss of the intracellular environment. A cholesterol-dependent toxin that causes cytolysis by forming pores in cholesterol containing host membranes. After binding to target membranes, the protein undergoes a major conformation change, leading to its insertion in the host membrane and formation of an oligomeric pore complex. Cholesterol is required for binding to host membranes, membrane insertion and pore formation; cholesterol binding is mediated by a Thr-Leu pair in the C-terminus. Acts as a major virulence factor required for the escape of bacteria from phagosomal vacuoles and entry into the host cytosol. Can be reversibly inactivated by oxidation. The protein is Listeriolysin O (hly) of Listeria monocytogenes serotype 1/2a (strain 08-5578).